Consider the following 946-residue polypeptide: Zinc finger CCCH-type antiviral protein 1 (946 aa).

An N-terminal domain region spans residues 1–254; it reads MTDPEVFCFI…DRSKSRDRFH (254 aa). The Nuclear localization signal signature appears at 69–76; the sequence is RARVCRRK. 4 C3H1-type zinc fingers span residues 73–86, 87–113, 150–172, and 173–194; these read CRRK…DSLH, LCKL…HDVL, CKSY…ERLH, and ICEH…HNLM. Disordered regions lie at residues 221 to 283 and 302 to 354; these read NKHT…KDPL and RAQL…AAGF. The segment at 224-254 is binding to EXOSC5; sequence TRRNPPSMRAPHPHRRGGAHRDRSKSRDRFH. Basic and acidic residues predominate over residues 242–257; it reads AHRDRSKSRDRFHHNS. Ser-257 carries the phosphoserine modification. Position 262 is a phosphoserine; by GSK3-beta (Ser-262). 3 positions are modified to phosphoserine: Ser-265, Ser-269, and Ser-273. Residue Thr-277 is modified to Phosphothreonine. The Nuclear export signal motif lies at 283-290; that stretch reads LEDVSADV. Phosphoserine occurs at positions 324 and 350. The short motif at 412–413 is the Nuclear localization signal element; it reads KR. Ser-425 is modified (phosphoserine). The tract at residues 461-491 is disordered; the sequence is NPAWPGTSTHNGPNGFSQIMDETPNVSKSSP. Over residues 466–477 the composition is skewed to polar residues; it reads GTSTHNGPNGFS. Residue Tyr-508 is modified to Phosphotyrosine. Residues 523–570 are disordered; it reads GETTTPVQGSNRLPPSPLSSSTSHRVAASGSPGKSSTHASVSPASEPS. Polar residues predominate over residues 524–533; it reads ETTTPVQGSN. The residue at position 553 (Ser-553) is a Phosphoserine. Positions 554–567 are enriched in polar residues; it reads PGKSSTHASVSPAS. Residues Ser-583 and Ser-680 each carry the phosphoserine modification. In terms of domain architecture, WWE spans 684–771; the sequence is FVEKTLNSVF…ASKTQRHVVR (88 aa). A PARP catalytic domain is found at 805 to 946; that stretch reads SPQRNASTVS…SLDSSGLQRK (142 aa).

Belongs to the ARTD/PARP family. Homodimer or homooligomer. Homooligomerization is essential for its antiviral activity. Interacts with EXOSC5. Interacts (via N-terminal domain) with DDX17 in an RNA-independent manner. Interacts with EXOSC3, EXOSC7, DCP2 and DCP1A. Interacts with PARN in an RNA-independent manner. Interacts with XRN1 in an RNA-dependent manner. Interacts (via N-terminal domain) with DHX30 (via N-terminus) in an RNA-independent manner. Isoform 2 interacts (via zinc-fingers) with RIGI in an RNA-dependent manner. Post-translationally, phosphorylation at Ser-273 is essential for sequential phosphorylation of Ser-269, Ser-265, Ser-262 and Ser-257 by GSK3-beta. Phosphorylation by GSK3-beta enhances its antiviral activity.

Its subcellular location is the cytoplasm. The protein resides in the nucleus. Antiviral protein which inhibits the replication of viruses by recruiting the cellular RNA degradation machineries to degrade the viral mRNAs. Binds to a ZAP-responsive element (ZRE) present in the target viral mRNA, recruits cellular poly(A)-specific ribonuclease PARN to remove the poly(A) tail, and the 3'-5' exoribonuclease complex exosome to degrade the RNA body from the 3'-end. It also recruits the decapping complex DCP1-DCP2 through RNA helicase p72 (DDX17) to remove the cap structure of the viral mRNA to initiate its degradation from the 5'-end. Its target viruses belong to families which include retroviridae: human immunodeficiency virus type 1 (HIV-1) and moloney and murine leukemia virus (MoMLV), filoviridae: ebola virus (EBOV) and marburg virus (MARV), togaviridae: sindbis virus (SINV) and Ross river virus (RRV). Specifically targets the multiply spliced but not unspliced or singly spliced HIV-1 mRNAs for degradation. Isoform 1 is a more potent viral inhibitor than isoform 2. Isoform 2 acts as a positive regulator of RIG-I signaling resulting in activation of the downstream effector IRF3 leading to the expression of type I IFNs and IFN stimulated genes (ISGs). This Mus musculus (Mouse) protein is Zinc finger CCCH-type antiviral protein 1 (Zc3hav1).